Here is a 251-residue protein sequence, read N- to C-terminus: 2,3-bisphosphoglycerate-dependent phosphoglycerate mutase (251 aa).

Substrate contacts are provided by residues 11–18, 24–25, Arg63, 90–93, Lys101, 117–118, and 184–185; these read RHGESDWN, TG, ERHY, RR, and GN. The Tele-phosphohistidine intermediate role is filled by His12. Glu90 functions as the Proton donor/acceptor in the catalytic mechanism.

The protein belongs to the phosphoglycerate mutase family. BPG-dependent PGAM subfamily.

It carries out the reaction (2R)-2-phosphoglycerate = (2R)-3-phosphoglycerate. It functions in the pathway carbohydrate degradation; glycolysis; pyruvate from D-glyceraldehyde 3-phosphate: step 3/5. Its function is as follows. Catalyzes the interconversion of 2-phosphoglycerate and 3-phosphoglycerate. The sequence is that of 2,3-bisphosphoglycerate-dependent phosphoglycerate mutase from Mycobacterium ulcerans (strain Agy99).